A 272-amino-acid chain; its full sequence is Indole-3-glycerol phosphate synthase (272 aa).

The protein belongs to the TrpC family.

It catalyses the reaction 1-(2-carboxyphenylamino)-1-deoxy-D-ribulose 5-phosphate + H(+) = (1S,2R)-1-C-(indol-3-yl)glycerol 3-phosphate + CO2 + H2O. It participates in amino-acid biosynthesis; L-tryptophan biosynthesis; L-tryptophan from chorismate: step 4/5. This is Indole-3-glycerol phosphate synthase from Arthrobacter sp. (strain FB24).